Here is a 498-residue protein sequence, read N- to C-terminus: uncharacterized protein (498 aa).

Positions 1-26 (MEESSMAQASLICLLLSFSIIMLSNA) are cleaved as a signal peptide. Over 27–441 (ADISIDCGSS…GEEKSSSNLA (415 aa)) the chain is Extracellular. N-linked (GlcNAc...) asparagine glycans are attached at residues asparagine 44, asparagine 150, asparagine 354, and asparagine 357. Positions 351 to 439 (GSGNGTNSTS…KSGEEKSSSN (89 aa)) are disordered. Residues 362-414 (SGGGSPSPGGGSGSPPSTGGGSGSPPSTGGGGGSPSKGGGGGKSGGSNNGDGG) are compositionally biased toward gly residues. Residues 418–436 (ASEDEKSADSSGKSGEEKS) are compositionally biased toward basic and acidic residues. Residues 442–462 (LPLGISLPTLLSLGAGGWGVW) form a helical membrane-spanning segment. Residues 463-498 (KYFIKPRRHPESELPLKQNISLQVNMGNATVVNAGQ) are Cytoplasmic-facing.

The protein resides in the membrane. This is an uncharacterized protein from Arabidopsis thaliana (Mouse-ear cress).